Reading from the N-terminus, the 89-residue chain is MPLTQDRKQELIGTYQVHETDTGSPEVQVAMLSDRINQLTEHLRSHPKDFSSRRGLLKLIGRRKQLLAYLAANEADRYRALVDRLGLRR.

The protein belongs to the universal ribosomal protein uS15 family. Part of the 30S ribosomal subunit. Forms a bridge to the 50S subunit in the 70S ribosome, contacting the 23S rRNA.

Functionally, one of the primary rRNA binding proteins, it binds directly to 16S rRNA where it helps nucleate assembly of the platform of the 30S subunit by binding and bridging several RNA helices of the 16S rRNA. Forms an intersubunit bridge (bridge B4) with the 23S rRNA of the 50S subunit in the ribosome. The sequence is that of Small ribosomal subunit protein uS15 from Gloeobacter violaceus (strain ATCC 29082 / PCC 7421).